The sequence spans 401 residues: Adenylosuccinate synthetase (401 aa).

Residues 11–17 and 39–41 contribute to the GTP site; these read GDEGKGK and GHT. Aspartate 12 acts as the Proton acceptor in catalysis. The Mg(2+) site is built by aspartate 12 and glycine 39. IMP contacts are provided by residues 12 to 15, 37 to 40, threonine 127, arginine 141, glutamine 212, threonine 227, and arginine 290; these read DEGK and NAGH. Histidine 40 (proton donor) is an active-site residue. Residue 286–292 coordinates substrate; that stretch reads ATTGRPR. GTP contacts are provided by residues arginine 292, 318–320, and 390–392; these read KGD and SVG.

This sequence belongs to the adenylosuccinate synthetase family. In terms of assembly, homodimer. It depends on Mg(2+) as a cofactor.

Its subcellular location is the cytoplasm. It catalyses the reaction IMP + L-aspartate + GTP = N(6)-(1,2-dicarboxyethyl)-AMP + GDP + phosphate + 2 H(+). It functions in the pathway purine metabolism; AMP biosynthesis via de novo pathway; AMP from IMP: step 1/2. Its function is as follows. Plays an important role in the de novo pathway of purine nucleotide biosynthesis. Catalyzes the first committed step in the biosynthesis of AMP from IMP. The polypeptide is Adenylosuccinate synthetase (Thermosipho africanus (strain TCF52B)).